A 79-amino-acid polypeptide reads, in one-letter code: U-actitoxin-Oulsp1 (79 aa).

The signal sequence occupies residues 1 to 21 (MNTKLVVVFLLSAILFVSVTA). The propeptide occupies 22–43 (SRPGKDLERDEAYETYDDENKR). Residues 45 to 79 (CKDVFPAATCRHAKSVGNCSSEKYKRNCAITCGAC) enclose the ShKT domain. 3 disulfide bridges follow: Cys45/Cys79, Cys54/Cys72, and Cys63/Cys76. Positions 67–68 (KY) are crucial for binding to potassium channels.

Belongs to the sea anemone type 1 potassium channel toxin family. Type 1b subfamily. In terms of processing, two similar peptides (OspTx2a-p1 and -p2) are obtained after synthesis and oxidative folding. They may differ by a D-Cys at position 76 (corresponding to OspTx2a-p2). Since C-terminal Cys residues are prone to racemization during solid-phase peptide synthesis, and if the presence of a D-amino acid is correct, it is probable that OspTx2a-p1 (L-Cys-76 form) corresponds to the native peptide.

The protein resides in the secreted. In terms of biological role, toxin that weakly blocks the two voltage-gated potassium channels on Kv1.2/KCNA2 (IC(50)=1.8-2.5 uM) and Kv1.6/KCNA6 (IC(50)=5.6-6.2 uM). The sequence is that of U-actitoxin-Oulsp1 from Oulactis sp. (Sea anemone).